We begin with the raw amino-acid sequence, 720 residues long: Putative glutamine--fructose-6-phosphate aminotransferase [isomerizing] (720 aa).

Catalysis depends on cysteine 2, which acts as the Nucleophile; for GATase activity. Residues 2 to 321 (CGIFGYCNFL…DNDIAHIYDG (320 aa)) enclose the Glutamine amidotransferase type-2 domain. A compositionally biased stretch (polar residues) spans 266–280 (STTSTFNHGSSTETP). The tract at residues 266 to 285 (STTSTFNHGSSTETPAENGL) is disordered. SIS domains lie at 393-532 (WLTE…DLVS) and 565-710 (CDKK…VDLP).

The enzyme catalyses D-fructose 6-phosphate + L-glutamine = D-glucosamine 6-phosphate + L-glutamate. Its pathway is nucleotide-sugar biosynthesis; UDP-N-acetyl-alpha-D-glucosamine biosynthesis; alpha-D-glucosamine 6-phosphate from D-fructose 6-phosphate: step 1/1. Functionally, involved in amino sugar synthesis (formation of chitin, supplies the amino sugars of asparagine-linked oligosaccharides of glycoproteins). This chain is Putative glutamine--fructose-6-phosphate aminotransferase [isomerizing], found in Saccharomyces cerevisiae (strain RM11-1a) (Baker's yeast).